Here is a 502-residue protein sequence, read N- to C-terminus: Intracellular exo-alpha-(1-&gt;5)-L-arabinofuranosidase (502 aa).

3 residues coordinate alpha-L-arabinofuranose: Glu-29, Asn-74, and Asn-174. Glu-175 acts as the Proton donor/acceptor in catalysis. Positions 246, 294, and 351 each coordinate alpha-L-arabinofuranose. Glu-294 serves as the catalytic Nucleophile.

Belongs to the glycosyl hydrolase 51 family. Homohexamer; trimer of dimers.

The protein localises to the cytoplasm. It catalyses the reaction Hydrolysis of terminal non-reducing alpha-L-arabinofuranoside residues in alpha-L-arabinosides.. It functions in the pathway glycan metabolism; L-arabinan degradation. Strongly inhibited by Hg(2+). Its function is as follows. Involved in the degradation of arabinan and is a key enzyme in the complete degradation of the plant cell wall. Catalyzes the cleavage of terminal alpha-(1-&gt;5)-arabinofuranosyl bonds in different hemicellulosic homopolysaccharides (branched and debranched arabinans). It acts preferentially on aryl-alpha-L-arabinofuranosides, and is much less effective on aryl-beta-D-xylopyranosides. The polypeptide is Intracellular exo-alpha-(1-&gt;5)-L-arabinofuranosidase (abfA) (Geobacillus stearothermophilus (Bacillus stearothermophilus)).